The chain runs to 575 residues: Intermediate filament protein ifa-1 (575 aa).

Disordered regions lie at residues 1–30 and 45–72; these read MMEI…TGNV and SGAG…EKKE. The interval 1–72 is head; the sequence is MMEITRETMS…RDSREREKKE (72 aa). Positions 7–17 are enriched in polar residues; that stretch reads ETMSFTSTTPS. Over residues 63-72 the composition is skewed to basic and acidic residues; the sequence is RDSREREKKE. An IF rod domain is found at 69 to 422; that stretch reads EKKEMSDLND…KMLEGEENRA (354 aa). The tract at residues 73–104 is coil 1A; it reads MSDLNDRLASYIEKVRFLEAQNRKLAADLDAL. Residues 105–118 form a linker 1 region; the sequence is RSKWGKDTHNIRNM. Residues 119–256 are coil 1B; the sequence is YEGELVDAQK…RVHDNEIKEL (138 aa). Residues 257–274 are linker 12; the sequence is QTLASRDTTPENREFFKN. A coil 2 region spans residues 275–422; it reads ELSSAIRDIR…KMLEGEENRA (148 aa). Residues 423 to 572 are tail; that stretch reads GLKQLVEQVV…EERATHIQRQ (150 aa). In terms of domain architecture, LTD spans 455–572; the sequence is SRQSFQRSAK…EERATHIQRQ (118 aa).

It belongs to the intermediate filament family. In terms of assembly, forms some heteromeric filaments with ifb-1. As to expression, isoform d is abundantly expressed in the marginal cells of the pharynx, forming apicobasally oriented thick filament bundles that are attached to the apical and basal plasma membrane by hemi-adherens junctions. Expression of isoform c is also seen in the excretory cells and in the uterus. Isoform c is detectable in the amphid sensory neurins and the pharyngeal-intestinal valve. Both isoform c and isoform d are expressed in the rectum and vulva and in some neurons of the tail. In larvae, expression is seen in the excretory cell, the vulva, the rectum and in the thick filament bundles of the pharynx. Expression in pharynx begins in late embryos.

It is found in the cytoplasm. Its function is as follows. Cytoplasmic intermediate filaments make up the structural component of the cytoskeleton providing mechanical strength to cells. Essential protein required during embryogenesis especially for survival past the L1 larva stage, involved in intestine morphogenesis. In Caenorhabditis elegans, this protein is Intermediate filament protein ifa-1 (ifa-1).